A 419-amino-acid chain; its full sequence is L-rhamnose isomerase (419 aa).

Residues His-262, Asp-294, and Asp-296 each coordinate Mn(2+).

The protein belongs to the rhamnose isomerase family. As to quaternary structure, homotetramer. Mn(2+) is required as a cofactor.

It localises to the cytoplasm. The catalysed reaction is L-rhamnopyranose = L-rhamnulose. It functions in the pathway carbohydrate degradation; L-rhamnose degradation; glycerone phosphate from L-rhamnose: step 1/3. Functionally, catalyzes the interconversion of L-rhamnose and L-rhamnulose. The chain is L-rhamnose isomerase from Klebsiella pneumoniae (strain 342).